Reading from the N-terminus, the 201-residue chain is Small ribosomal subunit protein uS4 (201 aa).

The S4 RNA-binding domain maps to 91 to 151 (SRLDNVVYRA…EKSRSMLWFE (61 aa)).

It belongs to the universal ribosomal protein uS4 family. In terms of assembly, part of the 30S ribosomal subunit. Contacts protein S5. The interaction surface between S4 and S5 is involved in control of translational fidelity.

Its function is as follows. One of the primary rRNA binding proteins, it binds directly to 16S rRNA where it nucleates assembly of the body of the 30S subunit. In terms of biological role, with S5 and S12 plays an important role in translational accuracy. The polypeptide is Small ribosomal subunit protein uS4 (Corynebacterium jeikeium (strain K411)).